Here is a 251-residue protein sequence, read N- to C-terminus: Adenosylcobinamide-GDP ribazoletransferase (251 aa).

7 helical membrane passes run L36 to S56, V60 to L80, V110 to F130, V141 to E161, E181 to I201, N202 to K222, and D231 to I251.

Belongs to the CobS family. Requires Mg(2+) as cofactor.

Its subcellular location is the cell membrane. The enzyme catalyses alpha-ribazole + adenosylcob(III)inamide-GDP = adenosylcob(III)alamin + GMP + H(+). The catalysed reaction is alpha-ribazole 5'-phosphate + adenosylcob(III)inamide-GDP = adenosylcob(III)alamin 5'-phosphate + GMP + H(+). Its pathway is cofactor biosynthesis; adenosylcobalamin biosynthesis; adenosylcobalamin from cob(II)yrinate a,c-diamide: step 7/7. Its function is as follows. Joins adenosylcobinamide-GDP and alpha-ribazole to generate adenosylcobalamin (Ado-cobalamin). Also synthesizes adenosylcobalamin 5'-phosphate from adenosylcobinamide-GDP and alpha-ribazole 5'-phosphate. This is Adenosylcobinamide-GDP ribazoletransferase from Clostridium perfringens (strain 13 / Type A).